A 332-amino-acid polypeptide reads, in one-letter code: UBA domain-containing protein Mud1 (332 aa).

The active site involves Asp127. A disordered region spans residues 246-298 (GLGIEPASKASASSPNPQSGTRLGTKESVAPNNEGSSNPPSLVNPPTDPGLNS). Over residues 251–264 (PASKASASSPNPQS) the composition is skewed to low complexity. The span at 275–286 (APNNEGSSNPPS) shows a compositional bias: polar residues. The region spanning 291–332 (PTDPGLNSKIAQLVSMGFDPLEAAQALDAANGDLDVAASFLL) is the UBA domain.

The protein belongs to the DDI1 family. In terms of assembly, homodimer. Interacts (via UBA domain) with polyubiquitin (polyUb) chains (via Lys-48-linked polyUbs). Has weak binding affinity for monoubiquitin. According to another report, has no affinity for monoubiquitin.

Its subcellular location is the cytoplasm. The protein localises to the cell membrane. In terms of biological role, recognizes and binds polyubiquitin chains. Acts as a linker between the 19S proteasome and polyubiquitinated proteins via UBA domain interactions with ubiquitin for their subsequent degradation. Aspartic protease. Appears to act as negative regulator of constitutive exocytosis. May act at the level of secretory vesicle docking and fusion as a competitive inhibitor of SNARE assembly. Required for S-phase checkpoint control. This Schizosaccharomyces pombe (strain 972 / ATCC 24843) (Fission yeast) protein is UBA domain-containing protein Mud1.